The primary structure comprises 407 residues: Phosphopentomutase (407 aa).

Residues aspartate 10, aspartate 306, histidine 311, aspartate 347, histidine 348, and histidine 359 each coordinate Mn(2+).

This sequence belongs to the phosphopentomutase family. The cofactor is Mn(2+).

Its subcellular location is the cytoplasm. The catalysed reaction is 2-deoxy-alpha-D-ribose 1-phosphate = 2-deoxy-D-ribose 5-phosphate. It carries out the reaction alpha-D-ribose 1-phosphate = D-ribose 5-phosphate. Its pathway is carbohydrate degradation; 2-deoxy-D-ribose 1-phosphate degradation; D-glyceraldehyde 3-phosphate and acetaldehyde from 2-deoxy-alpha-D-ribose 1-phosphate: step 1/2. Functionally, isomerase that catalyzes the conversion of deoxy-ribose 1-phosphate (dRib-1-P) and ribose 1-phosphate (Rib-1-P) to deoxy-ribose 5-phosphate (dRib-5-P) and ribose 5-phosphate (Rib-5-P), respectively. This chain is Phosphopentomutase, found in Shigella boydii serotype 18 (strain CDC 3083-94 / BS512).